A 38-amino-acid polypeptide reads, in one-letter code: Photosystem II reaction center protein M (38 aa).

A helical membrane pass occupies residues 7–27; it reads GFVASILFVLVPTVFLLILYI.

It belongs to the PsbM family. As to quaternary structure, PSII is composed of 1 copy each of membrane proteins PsbA, PsbB, PsbC, PsbD, PsbE, PsbF, PsbH, PsbI, PsbJ, PsbK, PsbL, PsbM, PsbT, PsbX, PsbY, PsbZ, Psb30/Ycf12, peripheral proteins PsbO, CyanoQ (PsbQ), PsbU, PsbV and a large number of cofactors. It forms dimeric complexes.

Its subcellular location is the cellular thylakoid membrane. Functionally, one of the components of the core complex of photosystem II (PSII). PSII is a light-driven water:plastoquinone oxidoreductase that uses light energy to abstract electrons from H(2)O, generating O(2) and a proton gradient subsequently used for ATP formation. It consists of a core antenna complex that captures photons, and an electron transfer chain that converts photonic excitation into a charge separation. This subunit is found at the monomer-monomer interface. The protein is Photosystem II reaction center protein M of Nostoc punctiforme (strain ATCC 29133 / PCC 73102).